A 136-amino-acid chain; its full sequence is Holo-[acyl-carrier-protein] synthase (136 aa).

The Mg(2+) site is built by D7 and E53.

Belongs to the P-Pant transferase superfamily. AcpS family. The cofactor is Mg(2+).

The protein resides in the cytoplasm. The catalysed reaction is apo-[ACP] + CoA = holo-[ACP] + adenosine 3',5'-bisphosphate + H(+). Transfers the 4'-phosphopantetheine moiety from coenzyme A to a Ser of acyl-carrier-protein. This Roseiflexus castenholzii (strain DSM 13941 / HLO8) protein is Holo-[acyl-carrier-protein] synthase.